Consider the following 217-residue polypeptide: Nucleolar protein 12 (217 aa).

Residues 34-98 (GFHKRKVERK…LVTAKTESVQ (65 aa)) adopt a coiled-coil conformation. The disordered stretch occupies residues 122–217 (LGLPLPEQGD…MTGKARHNGE (96 aa)). The span at 130-141 (GDQDGSQEEEMS) shows a compositional bias: acidic residues. Composition is skewed to basic residues over residues 172 to 184 (AHSRKKVKRKHPR) and 201 to 217 (KTQRRRRMTGKARHNGE).

This sequence belongs to the RRP17 family. As to quaternary structure, interacts with KIAA1191. Expressed in brain, lung, spleen, kidney and heart.

It localises to the nucleus. The protein localises to the nucleolus. The protein resides in the cytoplasm. In terms of biological role, multifunctional RNA binding protein that plays a role in RNA metabolism and DNA maintenance. Participates in the resolution of DNA stress and the maintenance of genome integrity by localizing to sites of DNA insults. Also plays a role in proper nucleolar organization by limiting nucleolar size and regulating nucleolar number. Mechanistically, regulates the nucleolar levels of fibrillarin and nucleolin, two key players in pre-rRNA processing and ribosome assembly. This Mus musculus (Mouse) protein is Nucleolar protein 12 (Nol12).